Reading from the N-terminus, the 176-residue chain is MSEQKQEFENENAENSEHLQDENLQNIEDVEQNKLQKDYDELKDKYMRANAEFENIKKRMEKEKLSAMAYANESFAKDLLDVLDALEAAVNVECQDEISLKIKEGVQNTLDLFLKKLEKHGVALIKDEKEFDPNLHEAMFHVDSENHQSGEVVQVLQKGYKIADRVIRPTKVSVAK.

The interval 1 to 28 (MSEQKQEFENENAENSEHLQDENLQNIE) is disordered.

It belongs to the GrpE family. Homodimer.

Its subcellular location is the cytoplasm. Its function is as follows. Participates actively in the response to hyperosmotic and heat shock by preventing the aggregation of stress-denatured proteins, in association with DnaK and GrpE. It is the nucleotide exchange factor for DnaK and may function as a thermosensor. Unfolded proteins bind initially to DnaJ; upon interaction with the DnaJ-bound protein, DnaK hydrolyzes its bound ATP, resulting in the formation of a stable complex. GrpE releases ADP from DnaK; ATP binding to DnaK triggers the release of the substrate protein, thus completing the reaction cycle. Several rounds of ATP-dependent interactions between DnaJ, DnaK and GrpE are required for fully efficient folding. The protein is Protein GrpE of Campylobacter jejuni subsp. jejuni serotype O:2 (strain ATCC 700819 / NCTC 11168).